A 396-amino-acid polypeptide reads, in one-letter code: Putative cytochrome P450 YjiB (396 aa).

Cys-349 provides a ligand contact to heme.

This sequence belongs to the cytochrome P450 family. It depends on heme as a cofactor.

This chain is Putative cytochrome P450 YjiB (yjiB), found in Bacillus subtilis (strain 168).